The chain runs to 301 residues: MKIAVLSRNPRLYSTRRLVEAGTERGHEMVVVDTLRAYMNIASHKPQIHYRGKPLEGFDAVIPRIGASVTFYGCAVLRQFEMMGVFPLNESVAIARSRDKLRSLQLLSRRGIGLPVTGFAHSPDDIPDLIEMVNGAPLVIKVLEGTQGIGVVLCETATAAESVIEAFMGLKQNIMVQEYIKEAGGADIRCFVVGDKVIAAMKRQAKPGEFRSNLHRGGSASLIKITPEERMTALRAAKVMGLSVAGVDILRSNHGPLVMEVNSSPGLEGIETTTGKNVAGIIIEHIEKNGGPNMTRTKGKG.

An ATP-grasp domain is found at 104-287 (LQLLSRRGIG…VAGIIIEHIE (184 aa)). ATP contacts are provided by residues lysine 141, 178-179 (EY), aspartate 187, and 211-213 (RSN). Mg(2+) contacts are provided by aspartate 248, glutamate 260, and asparagine 262. Residues aspartate 248, glutamate 260, and asparagine 262 each coordinate Mn(2+).

The protein belongs to the RimK family. Requires Mg(2+) as cofactor. Mn(2+) serves as cofactor.

The protein is Probable alpha-L-glutamate ligase of Pseudomonas fluorescens (strain ATCC BAA-477 / NRRL B-23932 / Pf-5).